The primary structure comprises 264 residues: Na(+)-translocating NADH-quinone reductase subunit E (264 aa).

Transmembrane regions (helical) follow at residues 11-31 (VFGIFLQATFIQNILLSNFLG), 50-70 (MSVALVLTVTGSINWVVHTFI), 90-110 (FLELIIFIVVIAAFTQILELL), 123-143 (GIFLPLIAVNCAILGGVLFGI), 149-169 (FIPMMIFSLGAGCGWWLAIVL), and 189-209 (MGISFITTGLIAMAFMSLTGI).

Belongs to the NqrDE/RnfAE family. As to quaternary structure, composed of six subunits; NqrA, NqrB, NqrC, NqrD, NqrE and NqrF.

The protein localises to the cell inner membrane. The enzyme catalyses a ubiquinone + n Na(+)(in) + NADH + H(+) = a ubiquinol + n Na(+)(out) + NAD(+). Its function is as follows. NQR complex catalyzes the reduction of ubiquinone-1 to ubiquinol by two successive reactions, coupled with the transport of Na(+) ions from the cytoplasm to the periplasm. NqrA to NqrE are probably involved in the second step, the conversion of ubisemiquinone to ubiquinol. The polypeptide is Na(+)-translocating NADH-quinone reductase subunit E (Chlamydia caviae (strain ATCC VR-813 / DSM 19441 / 03DC25 / GPIC) (Chlamydophila caviae)).